The following is a 139-amino-acid chain: Flagellar assembly factor FliW 2 (139 aa).

The protein belongs to the FliW family. In terms of assembly, interacts with translational regulator CsrA and flagellin(s).

It is found in the cytoplasm. Functionally, acts as an anti-CsrA protein, binds CsrA and prevents it from repressing translation of its target genes, one of which is flagellin. Binds to flagellin and participates in the assembly of the flagellum. The sequence is that of Flagellar assembly factor FliW 2 from Helicobacter hepaticus (strain ATCC 51449 / 3B1).